The chain runs to 428 residues: Serine--tRNA ligase (428 aa).

Position 231–233 (231–233) interacts with L-serine; the sequence is TAE. Position 262–264 (262–264) interacts with ATP; it reads RSE. Position 285 (E285) interacts with L-serine. 349-352 is a binding site for ATP; the sequence is EISS. Residue S385 participates in L-serine binding.

This sequence belongs to the class-II aminoacyl-tRNA synthetase family. Type-1 seryl-tRNA synthetase subfamily. As to quaternary structure, homodimer. The tRNA molecule binds across the dimer.

It is found in the cytoplasm. It catalyses the reaction tRNA(Ser) + L-serine + ATP = L-seryl-tRNA(Ser) + AMP + diphosphate + H(+). It carries out the reaction tRNA(Sec) + L-serine + ATP = L-seryl-tRNA(Sec) + AMP + diphosphate + H(+). It functions in the pathway aminoacyl-tRNA biosynthesis; selenocysteinyl-tRNA(Sec) biosynthesis; L-seryl-tRNA(Sec) from L-serine and tRNA(Sec): step 1/1. Its function is as follows. Catalyzes the attachment of serine to tRNA(Ser). Is also able to aminoacylate tRNA(Sec) with serine, to form the misacylated tRNA L-seryl-tRNA(Sec), which will be further converted into selenocysteinyl-tRNA(Sec). The chain is Serine--tRNA ligase from Staphylococcus aureus (strain MW2).